Reading from the N-terminus, the 567-residue chain is Urease subunit alpha (567 aa).

The 440-residue stretch at 128 to 567 folds into the Urease domain; that stretch reads GGIDAHVHFI…LPMSQRYFLF (440 aa). Ni(2+) contacts are provided by H133, H135, and K216. At K216 the chain carries N6-carboxylysine. H218 is a substrate binding site. H245 and H271 together coordinate Ni(2+). Catalysis depends on H319, which acts as the Proton donor. D359 serves as a coordination point for Ni(2+).

Belongs to the metallo-dependent hydrolases superfamily. Urease alpha subunit family. Heterotrimer of UreA (gamma), UreB (beta) and UreC (alpha) subunits. Three heterotrimers associate to form the active enzyme. Requires Ni cation as cofactor. In terms of processing, carboxylation allows a single lysine to coordinate two nickel ions.

Its subcellular location is the cytoplasm. It catalyses the reaction urea + 2 H2O + H(+) = hydrogencarbonate + 2 NH4(+). Its pathway is nitrogen metabolism; urea degradation; CO(2) and NH(3) from urea (urease route): step 1/1. In Blochmanniella pennsylvanica (strain BPEN), this protein is Urease subunit alpha.